The sequence spans 1050 residues: Self-sufficient cytochrome P450 monooxygenase CYP505E3 (1050 aa).

Cysteine 406 provides a ligand contact to heme. The span at 459–481 (RGQSATGLSQGSMSASGATSSVA) shows a compositional bias: polar residues. A disordered region spans residues 459–495 (RGQSATGLSQGSMSASGATSSVASPGPPAATGAQSNP). The 141-residue stretch at 501-641 (ISFFYGSNSG…DLELWEETNL (141 aa)) folds into the Flavodoxin-like domain. FMN contacts are provided by residues 507–511 (SNSGT) and 585–617 (VFGCGHHDWAKTFYRIPILIDDLMHKAGATRLT). An FAD-binding FR-type domain is found at 679–907 (RGLVEAKVTA…RPAKDAFHLP (229 aa)).

In the N-terminal section; belongs to the cytochrome P450 family. FAD serves as cofactor. Requires FMN as cofactor. Heme is required as a cofactor.

The enzyme catalyses 2 oxidized [cytochrome P450] + NADPH = 2 reduced [cytochrome P450] + NADP(+) + H(+). It catalyses the reaction an organic molecule + reduced [NADPH--hemoprotein reductase] + O2 = an alcohol + oxidized [NADPH--hemoprotein reductase] + H2O + H(+). It carries out the reaction decane + reduced [NADPH--hemoprotein reductase] + O2 = 3-decanol + oxidized [NADPH--hemoprotein reductase] + H2O + H(+). The catalysed reaction is dodecane + reduced [NADPH--hemoprotein reductase] + O2 = 5-dodecanol + oxidized [NADPH--hemoprotein reductase] + H2O + H(+). The enzyme catalyses tetradecane + reduced [NADPH--hemoprotein reductase] + O2 = 7-tetradecanol + oxidized [NADPH--hemoprotein reductase] + H2O + H(+). It catalyses the reaction hexadecane + reduced [NADPH--hemoprotein reductase] + O2 = 9-hexadecanol + oxidized [NADPH--hemoprotein reductase] + H2O + H(+). It carries out the reaction dodecanoate + reduced [NADPH--hemoprotein reductase] + O2 = 5-hydroxydodecanoate + oxidized [NADPH--hemoprotein reductase] + H2O + H(+). The catalysed reaction is tetradecanoate + reduced [NADPH--hemoprotein reductase] + O2 = 7-hydroxytetradecanoate + oxidized [NADPH--hemoprotein reductase] + H2O + H(+). The enzyme catalyses hexadecanoate + reduced [NADPH--hemoprotein reductase] + O2 = 9-hydroxyhexadecanoate + oxidized [NADPH--hemoprotein reductase] + H2O + H(+). It catalyses the reaction decan-1-ol + reduced [NADPH--hemoprotein reductase] + O2 = 1,3-decanediol + oxidized [NADPH--hemoprotein reductase] + H2O + H(+). It carries out the reaction decan-1-ol + reduced [NADPH--hemoprotein reductase] + O2 = 1,7-decanediol + oxidized [NADPH--hemoprotein reductase] + H2O + H(+). The catalysed reaction is dodecan-1-ol + reduced [NADPH--hemoprotein reductase] + O2 = 1,5-dodecanediol + oxidized [NADPH--hemoprotein reductase] + H2O + H(+). The enzyme catalyses dodecan-1-ol + reduced [NADPH--hemoprotein reductase] + O2 = 1,4-dodecanediol + oxidized [NADPH--hemoprotein reductase] + H2O + H(+). It catalyses the reaction dodecan-1-ol + reduced [NADPH--hemoprotein reductase] + O2 = 1,6-dodecanediol + oxidized [NADPH--hemoprotein reductase] + H2O + H(+). Self-sufficient cytochrome P450 monooxygenase that catalyzes the regioselective in-chain hydroxylation of alkanes, fatty alcohols, and fatty acids at the omega-7 position. Performs hydroxylation of C10-C16 n-alkanes and C12 and C14 fatty alcohols; and thereby enables the one step biocatalytic synthesis of rare alcohols such as 5-dodecanol and 7-tetradecanol. Converts 1-dodecanol into 1,5-dodecanediol as major product with very little sub-terminally hydroxylated products with the 1,4-dodecanediol and 1,6-dodecanediol more abundant. Does not use hexadecanediol nor decanoic acid as substrates. Converts dodecanoic acid to 5-hydroxydodecanoic acid which can be further converted into delta-dodecalactone by lactonization of the 5-hydroxy acid at low pH. Also gives sub-terminal hydroxylation of dodecanoic acid with 9-hydroxydodecanoic acid being the second most abundant product. The C14 and C16 fatty acids are double hydroxylated to yield dihydroxy acids hydroxylated at both the omega-7 position and a sub-terminal position (omega-1, omega-2, or omega-3). The sequence is that of Self-sufficient cytochrome P450 monooxygenase CYP505E3 from Aspergillus terreus (strain NIH 2624 / FGSC A1156).